Here is a 396-residue protein sequence, read N- to C-terminus: S-adenosylmethionine synthase (396 aa).

Histidine 16 lines the ATP pocket. Aspartate 18 contacts Mg(2+). A K(+)-binding site is contributed by glutamate 44. Positions 57 and 100 each coordinate L-methionine. Residues 100-110 (QSQDIARGVDN) form a flexible loop region. Residues 162-164 (DGK), 228-229 (RF), aspartate 237, 243-244 (RK), alanine 260, and lysine 264 contribute to the ATP site. Aspartate 237 serves as a coordination point for L-methionine. Lysine 268 contacts L-methionine.

Belongs to the AdoMet synthase family. As to quaternary structure, homotetramer; dimer of dimers. Mg(2+) is required as a cofactor. K(+) serves as cofactor.

The protein localises to the cytoplasm. The catalysed reaction is L-methionine + ATP + H2O = S-adenosyl-L-methionine + phosphate + diphosphate. It functions in the pathway amino-acid biosynthesis; S-adenosyl-L-methionine biosynthesis; S-adenosyl-L-methionine from L-methionine: step 1/1. In terms of biological role, catalyzes the formation of S-adenosylmethionine (AdoMet) from methionine and ATP. The overall synthetic reaction is composed of two sequential steps, AdoMet formation and the subsequent tripolyphosphate hydrolysis which occurs prior to release of AdoMet from the enzyme. The polypeptide is S-adenosylmethionine synthase (Myxococcus xanthus (strain DK1622)).